A 290-amino-acid polypeptide reads, in one-letter code: Endoplasmic reticulum-Golgi intermediate compartment protein 1 (290 aa).

At 1–27 (MSFDVRRFDIYRKVPKDLTQPTYTGAF) the chain is on the cytoplasmic side. A helical membrane pass occupies residues 28–48 (ISICCCVFMLFLFLSELTGFI). Residues 49–254 (ATEIVNELYV…RRRPFYRFIT (206 aa)) are Lumenal-facing. An N-linked (GlcNAc...) asparagine glycan is attached at Asn-74. The helical transmembrane segment at 255–275 (TICAIIGGTFTVAGIIDSCIF) threads the bilayer. Topologically, residues 276 to 290 (TASEAWKKIQIGKMS) are cytoplasmic.

Belongs to the ERGIC family.

The protein resides in the endoplasmic reticulum membrane. Its subcellular location is the endoplasmic reticulum-Golgi intermediate compartment membrane. It localises to the golgi apparatus membrane. Its function is as follows. Possible role in transport between endoplasmic reticulum and Golgi. This is Endoplasmic reticulum-Golgi intermediate compartment protein 1 (ergic1) from Danio rerio (Zebrafish).